The following is a 157-amino-acid chain: Transcription elongation factor GreA (157 aa).

Residues 13 to 75 adopt a coiled-coil conformation; sequence RARLEAELEE…EIKSILARAQ (63 aa). Positions 113–142 are disordered; that stretch reads EAKPSEGKISNESPIGSALLGKRPRQKVTV.

This sequence belongs to the GreA/GreB family.

Functionally, necessary for efficient RNA polymerase transcription elongation past template-encoded arresting sites. The arresting sites in DNA have the property of trapping a certain fraction of elongating RNA polymerases that pass through, resulting in locked ternary complexes. Cleavage of the nascent transcript by cleavage factors such as GreA or GreB allows the resumption of elongation from the new 3'terminus. GreA releases sequences of 2 to 3 nucleotides. This is Transcription elongation factor GreA from Roseiflexus sp. (strain RS-1).